Consider the following 323-residue polypeptide: Acetyl esterase (323 aa).

An Involved in the stabilization of the negatively charged intermediate by the formation of the oxyanion hole motif is present at residues His91 to Gly93. Residues Ser165, Asp262, and His292 contribute to the active site.

It belongs to the 'GDXG' lipolytic enzyme family. In terms of assembly, homodimer. Interacts with MalT and MelA.

It localises to the cytoplasm. Its function is as follows. Displays esterase activity towards short chain fatty esters (acyl chain length of up to 8 carbons). Able to hydrolyze triacetylglycerol (triacetin) and tributyrylglycerol (tributyrin), but not trioleylglycerol (triolein) or cholesterol oleate. Negatively regulates MalT activity by antagonizing maltotriose binding. Inhibits MelA galactosidase activity. The polypeptide is Acetyl esterase (Salmonella paratyphi A (strain ATCC 9150 / SARB42)).